The following is a 353-amino-acid chain: Beta-hexosaminidase (353 aa).

Residues aspartate 74, arginine 82, arginine 149, and 179 to 180 (KH) each bind substrate. The Proton donor/acceptor role is filled by histidine 192. The Nucleophile role is filled by aspartate 263.

This sequence belongs to the glycosyl hydrolase 3 family. NagZ subfamily.

The protein resides in the cytoplasm. The enzyme catalyses Hydrolysis of terminal non-reducing N-acetyl-D-hexosamine residues in N-acetyl-beta-D-hexosaminides.. It participates in cell wall biogenesis; peptidoglycan recycling. In terms of biological role, plays a role in peptidoglycan recycling by cleaving the terminal beta-1,4-linked N-acetylglucosamine (GlcNAc) from peptide-linked peptidoglycan fragments, giving rise to free GlcNAc, anhydro-N-acetylmuramic acid and anhydro-N-acetylmuramic acid-linked peptides. In Bordetella bronchiseptica (strain ATCC BAA-588 / NCTC 13252 / RB50) (Alcaligenes bronchisepticus), this protein is Beta-hexosaminidase.